The primary structure comprises 87 residues: Putative regulatory protein syc0519_c (87 aa).

It belongs to the RemA family.

This Synechococcus sp. (strain ATCC 27144 / PCC 6301 / SAUG 1402/1) (Anacystis nidulans) protein is Putative regulatory protein syc0519_c.